A 147-amino-acid polypeptide reads, in one-letter code: T-DNA border endonuclease VirD1 (147 aa).

Functionally, tumor formation by A.tumefaciens involves the transfer and integration of a defined segment (T-DNA) of Ti plasmid DNA into the plant nuclear genome. The virD operon encodes a site-specific endonuclease that cleaves at a unique site within both 24 bp direct repeats flanking the T-DNA. The chain is T-DNA border endonuclease VirD1 (virD1) from Rhizobium radiobacter (Agrobacterium tumefaciens).